A 135-amino-acid chain; its full sequence is Photosystem II extrinsic protein U (135 aa).

Residues 1-26 (MKNLVRLLAVIALIIGSFWGKVPAQA) form the signal peptide.

This sequence belongs to the PsbU family. As to quaternary structure, PSII is composed of 1 copy each of membrane proteins PsbA, PsbB, PsbC, PsbD, PsbE, PsbF, PsbH, PsbI, PsbJ, PsbK, PsbL, PsbM, PsbT, PsbX, PsbY, PsbZ, Psb30/Ycf12, peripheral proteins PsbO, CyanoQ (PsbQ), PsbU, PsbV and a large number of cofactors. It forms dimeric complexes.

Its subcellular location is the cellular thylakoid membrane. One of the extrinsic, lumenal subunits of photosystem II (PSII). PSII is a light-driven water plastoquinone oxidoreductase, using light energy to abstract electrons from H(2)O, generating a proton gradient subsequently used for ATP formation. The extrinsic proteins stabilize the structure of photosystem II oxygen-evolving complex (OEC), the ion environment of oxygen evolution and protect the OEC against heat-induced inactivation. The polypeptide is Photosystem II extrinsic protein U (Microcystis aeruginosa (strain NIES-843 / IAM M-2473)).